We begin with the raw amino-acid sequence, 486 residues long: Cardiolipin synthase A (486 aa).

2 helical membrane passes run Thr-3–Val-23 and Met-38–Phe-58. PLD phosphodiesterase domains are found at residues Met-219–Arg-246 and Glu-399–Ser-426. Catalysis depends on residues His-224, Lys-226, Asp-231, His-404, Lys-406, and Asp-411.

It belongs to the phospholipase D family. Cardiolipin synthase subfamily. ClsA sub-subfamily.

It is found in the cell inner membrane. It catalyses the reaction 2 a 1,2-diacyl-sn-glycero-3-phospho-(1'-sn-glycerol) = a cardiolipin + glycerol. In terms of biological role, catalyzes the reversible phosphatidyl group transfer from one phosphatidylglycerol molecule to another to form cardiolipin (CL) (diphosphatidylglycerol) and glycerol. In Yersinia pseudotuberculosis serotype O:3 (strain YPIII), this protein is Cardiolipin synthase A.